A 114-amino-acid chain; its full sequence is MGWKMASPTDDLEASLLSFEKLDRASPDLWPEQLPGVAEFAASFKSPITSSPPKWMAEIERDDIDMLKELGSLTTANLMEKVRGLQNLAYQLGLDESREMTRGKFLNILEKPKK.

Phosphoserine occurs at positions 26 and 51.

Belongs to the lin-52 family. In terms of assembly, component of the DREAM complex (also named LINC complex) at least composed of E2F4, E2F5, LIN9, LIN37, LIN52, LIN54, MYBL1, MYBL2, RBL1, RBL2, RBBP4, TFDP1 and TFDP2. The complex exists in quiescent cells where it represses cell cycle-dependent genes. It dissociates in S phase when LIN9, LIN37, LIN52 and LIN54 form a subcomplex that binds to MYBL2.

This Pongo abelii (Sumatran orangutan) protein is Protein lin-52 homolog (LIN52).